A 340-amino-acid chain; its full sequence is Protein-arginine kinase (340 aa).

One can recognise a Phosphagen kinase C-terminal domain in the interval 21–242 (VVLSSRIRLA…EQIIMQERVA (222 aa)). Residues 24-28 (SSRIR), His79, Arg113, 164-168 (RASVM), and 195-200 (RGIYGE) each bind ATP.

It belongs to the ATP:guanido phosphotransferase family.

It carries out the reaction L-arginyl-[protein] + ATP = N(omega)-phospho-L-arginyl-[protein] + ADP + H(+). Functionally, catalyzes the specific phosphorylation of arginine residues in proteins. The protein is Protein-arginine kinase of Listeria monocytogenes serovar 1/2a (strain ATCC BAA-679 / EGD-e).